The following is a 379-amino-acid chain: Putative thylakoid lumen peptidyl-prolyl cis-trans isomerase sll0408 (379 aa).

The N-terminal stretch at 1 to 33 (MQIIKTPLGIITRRGLQLSLLSLLLTMLSLTWA) is a signal peptide. The 189-residue stretch at 190–378 (GRATVEMTTN…SGADNLVNGN (189 aa)) folds into the PPIase cyclophilin-type domain.

It is found in the cellular thylakoid lumen. It catalyses the reaction [protein]-peptidylproline (omega=180) = [protein]-peptidylproline (omega=0). Functionally, PPIases accelerate the folding of proteins. It catalyzes the cis-trans isomerization of proline imidic peptide bonds in oligopeptides. Required for the assembly and stabilization of PSII. The polypeptide is Putative thylakoid lumen peptidyl-prolyl cis-trans isomerase sll0408 (Synechocystis sp. (strain ATCC 27184 / PCC 6803 / Kazusa)).